The chain runs to 404 residues: p-hydroxybenzoate hydroxylase (404 aa).

FAD contacts are provided by residues glutamate 35, 45–50 (RIRAGI), and glutamine 105. Residues tyrosine 203, 214 to 216 (SMR), and tyrosine 224 each bind substrate. Position 288 (aspartate 288) interacts with FAD. Proline 295 is a substrate binding site. 301–302 (LN) lines the FAD pocket.

The protein belongs to the aromatic-ring hydroxylase family. As to quaternary structure, homodimer. FAD serves as cofactor.

The enzyme catalyses 4-hydroxybenzoate + NADPH + O2 + H(+) = 3,4-dihydroxybenzoate + NADP(+) + H2O. Its pathway is aromatic compound metabolism; benzoate degradation via hydroxylation; 3,4-dihydroxybenzoate from benzoate: step 2/2. Its function is as follows. Catalyzes the incorporation of an atom of dioxygen into p-hydroxybenzoate (p-OHB) to form 3,4-dihydroxybenzoate (3,4DOHB). The reaction occurs in two parts: reduction of the flavin adenine dinucleotide (FAD) in the enzyme by reduced nicotinamide adenine dinucleotide phosphate (NADPH) in response to binding p-hydroxybenzoate to the enzyme and oxidation of reduced FAD with oxygen to form a hydroperoxide, which then oxygenates p-hydroxybenzoate. The protein is p-hydroxybenzoate hydroxylase (pobA) of Acinetobacter baylyi (strain ATCC 33305 / BD413 / ADP1).